We begin with the raw amino-acid sequence, 126 residues long: MQATTQIKTPVVGKHVYGELYGVDEALLKDEERLRKIVIEAAHIAKMHLVEVNSWRFKGGDKEGVSVIALVLESHIAIHTWPVYNFATVDVYTCGEHSDPMTAFRYIVSQLSPKRFTVNYADRSFK.

S74 serves as the catalytic Schiff-base intermediate with substrate; via pyruvic acid. At S74 the chain carries Pyruvic acid (Ser); by autocatalysis. H79 (proton acceptor; for processing activity) is an active-site residue. C94 acts as the Proton donor; for catalytic activity in catalysis.

It belongs to the prokaryotic AdoMetDC family. Type 1 subfamily. As to quaternary structure, heterooctamer of four alpha and four beta chains arranged as a tetramer of alpha/beta heterodimers. It depends on pyruvate as a cofactor. Is synthesized initially as an inactive proenzyme. Formation of the active enzyme involves a self-maturation process in which the active site pyruvoyl group is generated from an internal serine residue via an autocatalytic post-translational modification. Two non-identical subunits are generated from the proenzyme in this reaction, and the pyruvate is formed at the N-terminus of the alpha chain, which is derived from the carboxyl end of the proenzyme. The post-translation cleavage follows an unusual pathway, termed non-hydrolytic serinolysis, in which the side chain hydroxyl group of the serine supplies its oxygen atom to form the C-terminus of the beta chain, while the remainder of the serine residue undergoes an oxidative deamination to produce ammonia and the pyruvoyl group blocking the N-terminus of the alpha chain.

It carries out the reaction L-arginine + H(+) = agmatine + CO2. The protein operates within amine and polyamine biosynthesis; agmatine biosynthesis; agmatine from L-arginine: step 1/1. Its function is as follows. Specifically catalyzes the decarboxylation of L-arginine to agmatine. Has no S-adenosylmethionine decarboxylase (AdoMetDC) activity. This Pyrobaculum aerophilum (strain ATCC 51768 / DSM 7523 / JCM 9630 / CIP 104966 / NBRC 100827 / IM2) protein is Arginine decarboxylase proenzyme.